We begin with the raw amino-acid sequence, 530 residues long: Glucose-6-phosphate 1-dehydrogenase (530 aa).

NADP(+) is bound by residues 53 to 60, R87, Y162, and K186; that span reads GASGDLAK. Residues K186, 216 to 220, E254, and D273 each bind D-glucose 6-phosphate; that span reads HYLGK. The active-site Proton acceptor is the H278. R372 contributes to the NADP(+) binding site. D-glucose 6-phosphate is bound by residues K375 and R380. The NADP(+) site is built by K381, R385, and R408. Q410 provides a ligand contact to D-glucose 6-phosphate. NADP(+) is bound by residues 416–418, 436–438, R502, Y518, and W524; these read YAK and DLT.

It belongs to the glucose-6-phosphate dehydrogenase family.

The protein localises to the cytoplasm. Its subcellular location is the cytosol. The catalysed reaction is D-glucose 6-phosphate + NADP(+) = 6-phospho-D-glucono-1,5-lactone + NADPH + H(+). Its pathway is carbohydrate degradation; pentose phosphate pathway; D-ribulose 5-phosphate from D-glucose 6-phosphate (oxidative stage): step 1/3. In terms of biological role, cytosolic glucose-6-phosphate dehydrogenase that catalyzes the first and rate-limiting step of the oxidative branch within the pentose phosphate pathway/shunt, an alternative route to glycolysis for the dissimilation of carbohydrates and a major source of reducing power and metabolic intermediates for fatty acid and nucleic acid biosynthetic processes. The sequence is that of Glucose-6-phosphate 1-dehydrogenase (g6pd) from Takifugu rubripes (Japanese pufferfish).